A 207-amino-acid chain; its full sequence is Putative 3-methyladenine DNA glycosylase (207 aa).

Belongs to the DNA glycosylase MPG family.

The protein is Putative 3-methyladenine DNA glycosylase of Listeria welshimeri serovar 6b (strain ATCC 35897 / DSM 20650 / CCUG 15529 / CIP 8149 / NCTC 11857 / SLCC 5334 / V8).